The chain runs to 257 residues: Tryptophan synthase alpha chain (257 aa).

Residues E47 and D58 each act as proton acceptor in the active site.

Belongs to the TrpA family. Tetramer of two alpha and two beta chains.

It carries out the reaction (1S,2R)-1-C-(indol-3-yl)glycerol 3-phosphate + L-serine = D-glyceraldehyde 3-phosphate + L-tryptophan + H2O. It functions in the pathway amino-acid biosynthesis; L-tryptophan biosynthesis; L-tryptophan from chorismate: step 5/5. In terms of biological role, the alpha subunit is responsible for the aldol cleavage of indoleglycerol phosphate to indole and glyceraldehyde 3-phosphate. The polypeptide is Tryptophan synthase alpha chain (Listeria welshimeri serovar 6b (strain ATCC 35897 / DSM 20650 / CCUG 15529 / CIP 8149 / NCTC 11857 / SLCC 5334 / V8)).